Consider the following 192-residue polypeptide: Leucine-rich repeat-containing protein 51 (192 aa).

3 LRR repeats span residues 49–71, 80–101, and 103–124; these read SLTQSLWLNNNVLNDLRDFNQVA, NLAWIDLSFNDLTSIDPVLTTF, and NLSVLYLHGNSIQRLGEVNKLA. The 39-residue stretch at 137 to 175 folds into the LRRCT domain; sequence NPMEEEKGYRQYVLCTLSRITTFDFAGVTKADRTTAEVW.

It localises to the cytoplasm. The protein is Leucine-rich repeat-containing protein 51 of Pan troglodytes (Chimpanzee).